The following is a 134-amino-acid chain: Large ribosomal subunit protein uL14 (134 aa).

It belongs to the universal ribosomal protein uL14 family. Part of the 50S ribosomal subunit. Forms a cluster with proteins L3 and L19. In the 70S ribosome, L14 and L19 interact and together make contacts with the 16S rRNA in bridges B5 and B8.

Its function is as follows. Binds to 23S rRNA. Forms part of two intersubunit bridges in the 70S ribosome. The sequence is that of Large ribosomal subunit protein uL14 from Deinococcus geothermalis (strain DSM 11300 / CIP 105573 / AG-3a).